A 329-amino-acid chain; its full sequence is Phenylalanine--tRNA ligase alpha subunit (329 aa).

Glu254 lines the Mg(2+) pocket.

It belongs to the class-II aminoacyl-tRNA synthetase family. Phe-tRNA synthetase alpha subunit type 1 subfamily. As to quaternary structure, tetramer of two alpha and two beta subunits. Mg(2+) is required as a cofactor.

It is found in the cytoplasm. The enzyme catalyses tRNA(Phe) + L-phenylalanine + ATP = L-phenylalanyl-tRNA(Phe) + AMP + diphosphate + H(+). This Haemophilus influenzae (strain PittEE) protein is Phenylalanine--tRNA ligase alpha subunit.